A 242-amino-acid polypeptide reads, in one-letter code: Small ribosomal subunit protein uS2 (242 aa).

Belongs to the universal ribosomal protein uS2 family.

In Shewanella baltica (strain OS223), this protein is Small ribosomal subunit protein uS2.